The primary structure comprises 993 residues: ATP-dependent DNA helicase MPH1 (993 aa).

Residues 94 to 261 (IVHKSLFQNT…EVVNNLDISK (168 aa)) enclose the Helicase ATP-binding domain. Residue 107 to 114 (IPTGMGKT) coordinates ATP. The DEAH box signature appears at 209–212 (DEAH). Residues 507-655 (KVERLHRQEQ…CIDYKKSDRI (149 aa)) enclose the Helicase C-terminal domain. A disordered region spans residues 530–551 (NDKLERSARRTGSSEEAQISGM). Over residues 539–551 (RTGSSEEAQISGM) the composition is skewed to polar residues. Positions 751 to 810 (LVTSNENPSKKRKIFKALDNLENDSTEEASSSLETEDEEVSDDNNVFIAEGQNGCQKDLE) are FKH1-binding region. Phosphothreonine occurs at positions 776 and 785.

This sequence belongs to the DEAD box helicase family. DEAH subfamily. FANCM sub-subfamily. Interacts with the MHF histone-fold complex composed of MHF1 and MHF2 to form the FANCM-MHF complex. Interacts with FHK1. In terms of processing, phosphorylation at both Thr-776 and Thr-785 is required for the interaction with FKH1.

It is found in the nucleus. The enzyme catalyses ATP + H2O = ADP + phosphate + H(+). Its function is as follows. ATP-dependent DNA helicase involved in DNA damage repair by homologous recombination and in genome maintenance. Capable of unwinding D-loops. Plays a role in limiting crossover recombinants during mitotic DNA double-strand break (DSB) repair. Prevents crossovers between ectopic sequences by removing substrates for MUS81-MMS4 or RAD1-RAD10 cleavage. Component of a FANCM-MHF complex which promotes gene conversion at blocked replication forks, probably by reversal of the stalled fork. Binds to flap-structured DNA but not to non-flap nicked DNA, and participates in Okazaki fragment processing by stimulating the endonuclease activities of FEN1 and DNA2. Involved in recombination donor preference during mating-type switching via interaction with FKH1. This Saccharomyces cerevisiae (strain ATCC 204508 / S288c) (Baker's yeast) protein is ATP-dependent DNA helicase MPH1.